We begin with the raw amino-acid sequence, 124 residues long: Chemotaxis protein CheY1 (124 aa).

In terms of domain architecture, Response regulatory spans 2–120 (KLLVVDDSST…VLKEKLEVVL (119 aa)). Positions 7, 8, 53, and 55 each coordinate Mg(2+). A 4-aspartylphosphate modification is found at aspartate 53.

In terms of assembly, interacts (when phosphorylated) with FliM. Mg(2+) serves as cofactor. In terms of processing, phosphorylated by CheAY. Dephosphorylated (inactivated) by CheZ.

The protein localises to the cytoplasm. Functionally, chemotactic response regulator protein that modulates the rotation direction of bacterial flagellar motors. Plays an important role in the colonization and infection of Helicobacter pylori. Upon phosphorylation by CheA, interacts with the flagellar motor protein FliM to cause clockwise flagellar rotation and bacterial reversals, as opposed to straight swimming when CheY1 is not phosphorylated. This Helicobacter pylori (strain J99 / ATCC 700824) (Campylobacter pylori J99) protein is Chemotaxis protein CheY1 (cheY1).